The following is a 426-amino-acid chain: uncharacterized protein (426 aa).

Solcar repeat units follow at residues 125–216, 226–315, and 334–422; these read KNNV…MKRV, HSPL…LKRT, and PNGL…CKKW. 6 helical membrane passes run 130–151, 193–213, 229–249, 290–310, 336–356, and 394–415; these read YFIS…LDRL, GINV…YEAM, LYSY…IYPV, GVLV…GTFE, GLVM…VFPL, and LYKG…SYLV.

The protein belongs to the mitochondrial carrier (TC 2.A.29) family.

It is found in the mitochondrion inner membrane. This is an uncharacterized protein from Schizosaccharomyces pombe (strain 972 / ATCC 24843) (Fission yeast).